Consider the following 331-residue polypeptide: DNA-directed RNA polymerase subunit alpha (331 aa).

The alpha N-terminal domain (alpha-NTD) stretch occupies residues 1–226 (MLIAQRPTLT…ELFGLARELN (226 aa)). Residues 243–331 (LSSELSMPIE…SYDEDETTTN (89 aa)) are alpha C-terminal domain (alpha-CTD).

It belongs to the RNA polymerase alpha chain family. In terms of assembly, homodimer. The RNAP catalytic core consists of 2 alpha, 1 beta, 1 beta' and 1 omega subunit. When a sigma factor is associated with the core the holoenzyme is formed, which can initiate transcription.

The catalysed reaction is RNA(n) + a ribonucleoside 5'-triphosphate = RNA(n+1) + diphosphate. Functionally, DNA-dependent RNA polymerase catalyzes the transcription of DNA into RNA using the four ribonucleoside triphosphates as substrates. The sequence is that of DNA-directed RNA polymerase subunit alpha from Clavibacter sepedonicus (Clavibacter michiganensis subsp. sepedonicus).